Reading from the N-terminus, the 564-residue chain is Interactor of constitutive active ROPs 3 (564 aa).

Disordered regions lie at residues 1 to 73 (MQTQ…SRIT) and 88 to 135 (KAKD…SALE). Residues 33–44 (ESSSSPISATNR) are compositionally biased toward polar residues. Basic and acidic residues-rich tracts occupy residues 63–73 (VSEKKRPSRIT) and 98–123 (TSKK…KLEE). 2 coiled-coil regions span residues 70-133 (SRIT…ETSA) and 231-514 (AETE…AATA). Residue serine 533 is modified to Phosphoserine.

It belongs to the ICR family. As to quaternary structure, interacts with ARAC11 in vitro. As to expression, expressed in flowers.

Functionally, acts as a scaffold, mediating interaction of ROPs with different proteins. In Arabidopsis thaliana (Mouse-ear cress), this protein is Interactor of constitutive active ROPs 3 (ICR3).